The chain runs to 349 residues: Phosphate acyltransferase (349 aa).

The protein belongs to the PlsX family. Homodimer. Probably interacts with PlsY.

Its subcellular location is the cytoplasm. It carries out the reaction a fatty acyl-[ACP] + phosphate = an acyl phosphate + holo-[ACP]. Its pathway is lipid metabolism; phospholipid metabolism. Catalyzes the reversible formation of acyl-phosphate (acyl-PO(4)) from acyl-[acyl-carrier-protein] (acyl-ACP). This enzyme utilizes acyl-ACP as fatty acyl donor, but not acyl-CoA. This chain is Phosphate acyltransferase, found in Rhodopseudomonas palustris (strain BisA53).